The chain runs to 233 residues: Ribonuclease 3 (233 aa).

An RNase III domain is found at 9-136 (LQHFWEQFHL…IIGSVYLSGG (128 aa)). Position 49 (Glu-49) interacts with Mg(2+). Residue Asp-53 is part of the active site. Residues Asp-122 and Glu-125 each coordinate Mg(2+). Glu-125 is a catalytic residue. The region spanning 162–231 (DSKSALQEFV…ARAALALLKV (70 aa)) is the DRBM domain.

This sequence belongs to the ribonuclease III family. Homodimer. Mg(2+) is required as a cofactor.

Its subcellular location is the cytoplasm. The catalysed reaction is Endonucleolytic cleavage to 5'-phosphomonoester.. Functionally, digests double-stranded RNA. Involved in the processing of primary rRNA transcript to yield the immediate precursors to the large and small rRNAs (23S and 16S). Processes some mRNAs, and tRNAs when they are encoded in the rRNA operon. Processes pre-crRNA and tracrRNA of type II CRISPR loci if present in the organism. The chain is Ribonuclease 3 from Moorella thermoacetica (strain ATCC 39073 / JCM 9320).